The following is a 417-amino-acid chain: Serine hydroxymethyltransferase 3 (417 aa).

(6S)-5,6,7,8-tetrahydrofolate is bound by residues Leu-121 and 125–127 (GHL). Lys-230 is subject to N6-(pyridoxal phosphate)lysine. Residue 355–357 (SPF) participates in (6S)-5,6,7,8-tetrahydrofolate binding.

Belongs to the SHMT family. In terms of assembly, homodimer. The cofactor is pyridoxal 5'-phosphate.

Its subcellular location is the cytoplasm. The catalysed reaction is (6R)-5,10-methylene-5,6,7,8-tetrahydrofolate + glycine + H2O = (6S)-5,6,7,8-tetrahydrofolate + L-serine. The protein operates within one-carbon metabolism; tetrahydrofolate interconversion. It functions in the pathway amino-acid biosynthesis; glycine biosynthesis; glycine from L-serine: step 1/1. Functionally, catalyzes the reversible interconversion of serine and glycine with tetrahydrofolate (THF) serving as the one-carbon carrier. This reaction serves as the major source of one-carbon groups required for the biosynthesis of purines, thymidylate, methionine, and other important biomolecules. Also exhibits THF-independent aldolase activity toward beta-hydroxyamino acids, producing glycine and aldehydes, via a retro-aldol mechanism. In Pseudomonas fluorescens (strain Pf0-1), this protein is Serine hydroxymethyltransferase 3.